The primary structure comprises 174 residues: MILTGKEILKRLGSDIKIEPYDEKLLNPNSYNLRLHEDLLVYSEFPLDMKKPNPVRTLKIPEEGLLLEPGNLYLGRTIEFTETHNLVPMLEGRSSIGRLGMFVHITAGFGDVGFKGFWTLEIQVTHPLRVYSGVQICQIFYHTVEGEISEYKSGKYQANQGIQPSLLYKDFEKK.

Residues 93-98, Asp-111, 119-121, Gln-138, and Tyr-151 each bind dCTP; these read RSSIGR and TLE. The active-site Proton donor/acceptor is Glu-121.

This sequence belongs to the dCTP deaminase family. Homotrimer.

It catalyses the reaction dCTP + 2 H2O = dUMP + NH4(+) + diphosphate. Its pathway is pyrimidine metabolism; dUMP biosynthesis; dUMP from dCTP: step 1/1. Bifunctional enzyme that catalyzes both the deamination of dCTP to dUTP and the hydrolysis of dUTP to dUMP without releasing the toxic dUTP intermediate. This Leptospira biflexa serovar Patoc (strain Patoc 1 / Ames) protein is dCTP deaminase, dUMP-forming.